The chain runs to 492 residues: GPI alpha-1,6-mannosyltransferase 2 (492 aa).

At 1-13 (MGLLDPSQKEVLK) the chain is on the cytoplasmic side. Residues 14–34 (FAVSCRILTLVLQALFNIIIP) traverse the membrane as a helical segment. Residues 35–77 (DHHADAFSPPRLAPSGSVDQLVEALLGGLSRWDAEHFLFIAEH) are Lumenal-facing. Residues 78-98 (GYLYEHNFAFFPGFPLALLMG) traverse the membrane as a helical segment. The Cytoplasmic portion of the chain corresponds to 99–113 (TELLRPLQGLLSERS). A helical transmembrane segment spans residues 114–134 (CLLVSVALLNSLFSVLAAVAL). Over 135 to 136 (HD) the chain is Lumenal. The helical transmembrane segment at 137–157 (LGCLVLHCPRQAFCAALLFCL) threads the bilayer. The Cytoplasmic segment spans residues 158 to 161 (SPAN). A helical membrane pass occupies residues 162–182 (VFLAAGYSEALFAFLTFSAMG). Topologically, residues 183 to 192 (QLERGRGWAS) are lumenal. A helical transmembrane segment spans residues 193–213 (GLLFALAAGVRSNGLVSVGFL). Over 214–234 (LHSQCRGFCSSLVVLDPLKGL) the chain is Cytoplasmic. The helical transmembrane segment at 235-255 (VKLMASLCLSVLTVSLPFALF) threads the bilayer. The Lumenal segment spans residues 256–327 (QYYAYTQFCF…RYYELRQVPN (72 aa)). A helical membrane pass occupies residues 328–348 (FLLATPVTVLVVWATWTYVTA). Residues 349-378 (HPWLCLTLGLQRTKDRESLEKPHPGFLSAK) are Cytoplasmic-facing. The chain crosses the membrane as a helical span at residues 379–399 (VFVYLVHAAALLAFGGLCMHV). The Lumenal portion of the chain corresponds to 400–468 (QVLTRLLGSS…NWKTCSPVTK (69 aa)). The helical transmembrane segment at 469–489 (CILVYFLTYWLLGLIMHCNFL) threads the bilayer. Residues 490–492 (PWT) lie on the Cytoplasmic side of the membrane.

It belongs to the PIGV family. Post-translationally, not N-glycosylated.

The protein localises to the endoplasmic reticulum membrane. The protein operates within glycolipid biosynthesis; glycosylphosphatidylinositol-anchor biosynthesis. Its function is as follows. Alpha-1,6-mannosyltransferase that catalyzes the transfer of the second mannose, via an alpha-1,6 bond, from a dolichol-phosphate-mannose (Dol-P-Man) to the alpha-D-Man-(1-&gt;4)-alpha-D-GlcN-(1-&gt;6)-(1-radyl,2-acyl-sn-glycero-3-phospho)-2-acyl-inositol (also termed H2) intermediate to generate an alpha-D-Man-(1-&gt;6)-alpha-D-Man-(1-&gt;4)-alpha-D-GlcN-(1-&gt;6)-(1-radyl,2-acyl-sn-glycero-3-phospho)-2-acyl-inositol (also termed H3) and participates in the seventh step of the glycosylphosphatidylinositol-anchor biosynthesis. Also transfers the second mannose on a 2-PEtn-alpha-D-Man-(1-&gt;4)-alpha-D-GlcN-(1-&gt;6)-(1-radyl,2-acyl-sn-glycero-3-phospho)-2-acyl-inositol (also termed H5). This is GPI alpha-1,6-mannosyltransferase 2 from Rattus norvegicus (Rat).